The sequence spans 483 residues: ATP synthase subunit beta (483 aa).

169 to 176 (GGAGVGKT) serves as a coordination point for ATP.

Belongs to the ATPase alpha/beta chains family. F-type ATPases have 2 components, CF(1) - the catalytic core - and CF(0) - the membrane proton channel. CF(1) has five subunits: alpha(3), beta(3), gamma(1), delta(1), epsilon(1). CF(0) has three main subunits: a(1), b(2) and c(9-12). The alpha and beta chains form an alternating ring which encloses part of the gamma chain. CF(1) is attached to CF(0) by a central stalk formed by the gamma and epsilon chains, while a peripheral stalk is formed by the delta and b chains.

The protein localises to the cell membrane. It carries out the reaction ATP + H2O + 4 H(+)(in) = ADP + phosphate + 5 H(+)(out). In terms of biological role, produces ATP from ADP in the presence of a proton gradient across the membrane. The catalytic sites are hosted primarily by the beta subunits. In Rhodococcus erythropolis (strain PR4 / NBRC 100887), this protein is ATP synthase subunit beta.